A 528-amino-acid chain; its full sequence is Sensory rhodopsin I transducer (528 aa).

The next 2 membrane-spanning stretches (helical) occupy residues 11–31 (GAKL…VGVV) and 35–55 (VAST…INAA). HAMP domains follow at residues 55–107 (AETV…DRLS) and 142–195 (TAYQ…ETIE). One can recognise a Methyl-accepting transducer domain in the interval 214-455 (TSRRVQQEVD…ATADSIADVT (242 aa)). At glutamate 259 the chain carries Glutamate methyl ester (Glu).

It belongs to the methyl-accepting chemotaxis (MCP) protein family. In terms of assembly, interacts with Sop1.

It is found in the cell membrane. Functionally, transduces signals from the phototaxis receptor sensory rhodopsin I (Sop1). The chain is Sensory rhodopsin I transducer (htr1) from Haloarcula marismortui (strain ATCC 43049 / DSM 3752 / JCM 8966 / VKM B-1809) (Halobacterium marismortui).